The primary structure comprises 582 residues: Putative G-protein coupled receptor B0244.10 (582 aa).

4 helical membrane-spanning segments follow: residues 25–45 (LYII…PLGL), 70–90 (ITFS…GFAV), 120–140 (WTFF…GLVI), and 159–179 (LLVQ…VFLT). N-linked (GlcNAc...) asparagine glycosylation is present at asparagine 190. Residues 199 to 218 (LTLGKWFIALYRFLFQMTNI) traverse the membrane as a helical segment. N-linked (GlcNAc...) asparagine glycans are attached at residues asparagine 221 and asparagine 237. Transmembrane regions (helical) follow at residues 253–273 (SLMI…AVLV), 296–316 (YIFV…IIII), 329–349 (TFAF…SLLG), 377–397 (IYII…PFGL), and 421–441 (WLLF…LLFV). Asparagine 457 carries an N-linked (GlcNAc...) asparagine glycan. The next 2 membrane-spanning stretches (helical) occupy residues 475 to 495 (TILV…AAFG) and 513 to 533 (LIFP…TFLL). An N-linked (GlcNAc...) asparagine glycan is attached at asparagine 538.

Belongs to the G-protein coupled receptor 1 family. B0244 subfamily.

Its subcellular location is the cell membrane. The sequence is that of Putative G-protein coupled receptor B0244.10 from Caenorhabditis elegans.